Reading from the N-terminus, the 204-residue chain is Holliday junction branch migration complex subunit RuvA (204 aa).

Residues 1–64 (MFAFLRGELV…EDLQQLFGFL (64 aa)) are domain I. The interval 65-143 (DEEELQLFRL…KIQPTSSAKA (79 aa)) is domain II. Residues 144–151 (GAPSAVLS) form a flexible linker region. Residues 151–204 (SATQLIDDAVAALTTLGFPKASAQKAVSKVLETTPGLSVEELVRTSLAAMHNNL) form a domain III region.

The protein belongs to the RuvA family. As to quaternary structure, homotetramer. Forms an RuvA(8)-RuvB(12)-Holliday junction (HJ) complex. HJ DNA is sandwiched between 2 RuvA tetramers; dsDNA enters through RuvA and exits via RuvB. An RuvB hexamer assembles on each DNA strand where it exits the tetramer. Each RuvB hexamer is contacted by two RuvA subunits (via domain III) on 2 adjacent RuvB subunits; this complex drives branch migration. In the full resolvosome a probable DNA-RuvA(4)-RuvB(12)-RuvC(2) complex forms which resolves the HJ.

Its subcellular location is the cytoplasm. In terms of biological role, the RuvA-RuvB-RuvC complex processes Holliday junction (HJ) DNA during genetic recombination and DNA repair, while the RuvA-RuvB complex plays an important role in the rescue of blocked DNA replication forks via replication fork reversal (RFR). RuvA specifically binds to HJ cruciform DNA, conferring on it an open structure. The RuvB hexamer acts as an ATP-dependent pump, pulling dsDNA into and through the RuvAB complex. HJ branch migration allows RuvC to scan DNA until it finds its consensus sequence, where it cleaves and resolves the cruciform DNA. The protein is Holliday junction branch migration complex subunit RuvA of Chlorobaculum parvum (strain DSM 263 / NCIMB 8327) (Chlorobium vibrioforme subsp. thiosulfatophilum).